The sequence spans 516 residues: High-affinity nitrate transporter 2.3 (516 aa).

A run of 12 helical transmembrane segments spans residues 52–72 (WFSF…LPLI), 76–96 (LGLT…GAVF), 112–132 (LASA…SIIQ), 142–162 (FFTG…SSMF), 172–192 (GVAG…MPLV), 209–229 (IAFF…LAFG), 265–285 (WILA…DNVV), 299–319 (TAGL…PGGG), 335–354 (LWGL…VLGI), 367–387 (VLFS…VPFV), 395–415 (ISGM…YIFF), and 425–445 (GIKY…LIYF). The disordered stretch occupies residues 489 to 516 (SVREGGRSSANGGQPRHTVPVDASPAGV).

The protein belongs to the major facilitator superfamily. Nitrate/nitrite porter (TC 2.A.1.8) family. Heterotetramer composed of two NRT2.3 and two NAR2.1. Isoform 1 interacts with NAR2.1, but not isoform 2. Expressed in the stelar cells of both primary and lateral roots, particularly at the site of lateral root emergence, root-shoot junction zone, vascular tissues of adventitious root primordia, leaves, germ tips and seed scutellum.

The protein localises to the cell membrane. Functionally, involved in nitrate transport, but does not seem to be able to mediate transport by its own. Acts as a dual component transporter with NAR2.1. Imports nitrate with high affinity when expressed with NAR2.1 in a heterologous system (Xenopus oocytes). Plays a key role in long-distance nitrate transport from root to shoot particularly at low external nitrate supply. The sequence is that of High-affinity nitrate transporter 2.3 (NRT2.3) from Oryza sativa subsp. japonica (Rice).